Here is a 473-residue protein sequence, read N- to C-terminus: Gamma-aminobutyric acid receptor subunit beta-3 (473 aa).

Positions 1 to 25 (MWGFAGGRLFGIFSAPVLVAVVCCA) are cleaved as a signal peptide. The Extracellular portion of the chain corresponds to 26-246 (QSVNDPGNMS…FRLKRNIGYF (221 aa)). N-linked (GlcNAc...) asparagine glycans are attached at residues Asn33 and Asn105. Position 122 (Tyr122) interacts with histamine. Cys161 and Cys175 are disulfide-bonded. Asn174 carries an N-linked (GlcNAc...) asparagine glycan. 4-aminobutanoate is bound by residues Glu180, Tyr182, and Thr227. Histamine is bound by residues 181–182 (SY) and Thr227. The chain crosses the membrane as a helical span at residues 247–267 (ILQTYMPSILITILSWVSFWI). Residues 268–271 (NYDA) lie on the Cytoplasmic side of the membrane. A helical transmembrane segment spans residues 272 to 292 (SAARVALGITTVLTMTTINTH). At 293 to 304 (LRETLPKIPYVK) the chain is on the extracellular side. A helical membrane pass occupies residues 305–328 (AIDMYLMGCFVFVFLALLEYAFVN). At 329–447 (YIFFGRGPQR…KIPDLTDVNA (119 aa)) the chain is on the cytoplasmic side. The chain crosses the membrane as a helical span at residues 448–470 (IDRWSRIVFPFTFSLFNLVYWLY). The Extracellular segment spans residues 471-473 (YVN).

It belongs to the ligand-gated ion channel (TC 1.A.9) family. Gamma-aminobutyric acid receptor (TC 1.A.9.5) subfamily. GABRB3 sub-subfamily. Heteropentamer, formed by a combination of alpha (GABRA1-6), beta (GABRB1-3), gamma (GABRG1-3), delta (GABRD), epsilon (GABRE), rho (GABRR1-3), pi (GABRP) and theta (GABRQ) chains, each subunit exhibiting distinct physiological and pharmacological properties. Can form functional homopentamers (in vitro). Interacts with UBQLN1. May interact with KIF21B. Identified in a complex of 720 kDa composed of LHFPL4, NLGN2, GABRA1, GABRB2, GABRG2 and GABRB3. Interacts with LHFPL4. Interacts with GIT1; this interaction is required for synaptic GABRB3 surface stability and inhibitory synapse strength.

The protein resides in the postsynaptic cell membrane. The protein localises to the cell membrane. It localises to the cytoplasmic vesicle membrane. It carries out the reaction chloride(in) = chloride(out). With respect to regulation, potentiated by histamine. Beta subunit of the heteropentameric ligand-gated chloride channel gated by gamma-aminobutyric acid (GABA), a major inhibitory neurotransmitter in the brain. GABA-gated chloride channels, also named GABA(A) receptors (GABAAR), consist of five subunits arranged around a central pore and contain GABA active binding site(s) located at the alpha and beta subunit interface(s). GABAARs containing beta-3/GABRB3 subunit are found at both synaptic and extrasynaptic sites. When activated by GABA, GABAARs selectively allow the flow of chloride anions across the cell membrane down their electrochemical gradient. Chloride influx into the postsynaptic neuron following GABAAR opening decreases the neuron ability to generate a new action potential, thereby reducing nerve transmission. GABAARs containing alpha-1 and beta-3 subunits exhibit synaptogenic activity; the gamma-2 subunit being necessary but not sufficient to induce rapid synaptic contacts formation. Extrasynaptic beta-3 receptors contribute to the tonic GABAergic inhibition. GABAARs containing alpha-1, beta-3 and epsilon subunits may permit spontaneous chloride channel activity while preserving the structural information required for GABA-gated openings. Beta-containing GABAARs can simultaneously bind GABA and histamine where histamine binds at the interface of two neighboring beta subunits, which may be involved in the regulation of sleep and wakefulness. Plays an important role in somatosensation and in the production of antinociception. The polypeptide is Gamma-aminobutyric acid receptor subunit beta-3 (Mus musculus (Mouse)).